The sequence spans 427 residues: G2/mitotic-specific cyclin-3 (427 aa).

Positions 1–12 (MHHNSQSLSSGH) are enriched in polar residues. Disordered stretches follow at residues 1-29 (MHHN…NLKH) and 89-126 (SVAQ…EDQE). The span at 89 to 105 (SVAQRKEADHNDLLTDR) shows a compositional bias: basic and acidic residues. Residues 106-126 (EQEEPVEDDGESEEDEEEDQE) show a composition bias toward acidic residues.

Belongs to the cyclin family. Cyclin AB subfamily.

Functionally, essential for the control of the cell cycle at the G2/M (mitosis) transition. Interacts with the CDC2 protein kinase to form MPF. G2/M cyclins accumulate steadily during G2 and are abruptly destroyed at mitosis. In Saccharomyces cerevisiae (strain ATCC 204508 / S288c) (Baker's yeast), this protein is G2/mitotic-specific cyclin-3 (CLB3).